Consider the following 198-residue polypeptide: Recombination protein RecR (198 aa).

A C4-type zinc finger spans residues cysteine 57–cysteine 72. Residues glutamate 80–alanine 175 form the Toprim domain.

It belongs to the RecR family.

Its function is as follows. May play a role in DNA repair. It seems to be involved in an RecBC-independent recombinational process of DNA repair. It may act with RecF and RecO. In Streptococcus equi subsp. equi (strain 4047), this protein is Recombination protein RecR.